We begin with the raw amino-acid sequence, 403 residues long: Basic leucine zipper 25 (403 aa).

Disordered stretches follow at residues 13 to 128 (SFWP…APVV) and 156 to 259 (VKPE…EFDT). Positions 24 to 33 (PGSSSTPSPT) are enriched in low complexity. Residues 56 to 69 (LSGSDSSPTTNTIE) are compositionally biased toward polar residues. Composition is skewed to low complexity over residues 115–128 (APSSDPVDSSAPVV) and 161–174 (SSASASNQKQAQGS). Residues 175-195 (IVAQTSPGASSVRFSPTTSTQ) show a composition bias toward polar residues. Over residues 212–226 (DSDDDDLDGDADNGD) the composition is skewed to acidic residues. A Phosphoserine modification is found at Ser213. The bZIP domain maps to 229 to 292 (DVKRARRMLS…DAAAVDNRIL (64 aa)). The tract at residues 231-250 (KRARRMLSNRESARRSRRRK) is basic motif. The Nuclear localization signal motif lies at 233 to 240 (ARRMLSNR). Residues 264–271 (LRAEHSTL) are leucine-zipper. Low complexity predominate over residues 332-345 (NTPSASSSIPPNSN). Disordered regions lie at residues 332–361 (NTPSASSSIPPNSNHILKPANSSTNTSAGL) and 380–403 (EGMQNPFAPDSNLYETLPHWNHKH). Over residues 351-361 (ANSSTNTSAGL) the composition is skewed to polar residues.

The protein belongs to the bZIP family. In terms of assembly, homodimer. Forms a heterodimer with BZIP1, BZIP1, BZIP2, BZIP9, BZIP11, BZIP44, BZIP53 and BZIP63. Interacts with ABI3 and forms a complex made of ABI3, BZIP53 and BZIP25. In terms of tissue distribution, expressed in roots, shoots, stems, leaves, stipulae, siliques, seeds, pollen, and flowers.

Its subcellular location is the nucleus. In terms of biological role, transcription factor that binds to the 5'-ACGT-3' box, especially present in G-box-like motif (5'-CCACGTGGCC-3'), ABRE elements, of seed storage protein (SSP) encoding gene promoters (e.g. At2S and CRU3) and promotes their expression in seeds when in complex with ABI3 and BZIP53. The protein is Basic leucine zipper 25 (BZIP25) of Arabidopsis thaliana (Mouse-ear cress).